A 436-amino-acid chain; its full sequence is Bifunctional protein GlmU (436 aa).

The pyrophosphorylase stretch occupies residues 1 to 226 (MNEISIIILA…ETNFMGINDK (226 aa)). UDP-N-acetyl-alpha-D-glucosamine-binding positions include 9-12 (LAAG), Lys23, Gln75, and 82-83 (GT). Mg(2+) is bound at residue Asp105. Gly138, Glu152, Asn167, and Asn224 together coordinate UDP-N-acetyl-alpha-D-glucosamine. Asn224 is a Mg(2+) binding site. Residues 227–247 (FALSIAEEIMQNRIKENLMKN) form a linker region. Residues 248–436 (GVIMSLPDTI…YKFFGKNDEK (189 aa)) are N-acetyltransferase. Positions 311 and 328 each coordinate UDP-N-acetyl-alpha-D-glucosamine. His339 (proton acceptor) is an active-site residue. UDP-N-acetyl-alpha-D-glucosamine-binding residues include Tyr342 and Asn353. Residues 362–363 (NY), Ser381, Ala399, and Arg416 each bind acetyl-CoA.

The protein in the N-terminal section; belongs to the N-acetylglucosamine-1-phosphate uridyltransferase family. It in the C-terminal section; belongs to the transferase hexapeptide repeat family. Homotrimer. Requires Mg(2+) as cofactor.

It is found in the cytoplasm. It catalyses the reaction alpha-D-glucosamine 1-phosphate + acetyl-CoA = N-acetyl-alpha-D-glucosamine 1-phosphate + CoA + H(+). The catalysed reaction is N-acetyl-alpha-D-glucosamine 1-phosphate + UTP + H(+) = UDP-N-acetyl-alpha-D-glucosamine + diphosphate. Its pathway is nucleotide-sugar biosynthesis; UDP-N-acetyl-alpha-D-glucosamine biosynthesis; N-acetyl-alpha-D-glucosamine 1-phosphate from alpha-D-glucosamine 6-phosphate (route II): step 2/2. It participates in nucleotide-sugar biosynthesis; UDP-N-acetyl-alpha-D-glucosamine biosynthesis; UDP-N-acetyl-alpha-D-glucosamine from N-acetyl-alpha-D-glucosamine 1-phosphate: step 1/1. It functions in the pathway bacterial outer membrane biogenesis; LPS lipid A biosynthesis. In terms of biological role, catalyzes the last two sequential reactions in the de novo biosynthetic pathway for UDP-N-acetylglucosamine (UDP-GlcNAc). The C-terminal domain catalyzes the transfer of acetyl group from acetyl coenzyme A to glucosamine-1-phosphate (GlcN-1-P) to produce N-acetylglucosamine-1-phosphate (GlcNAc-1-P), which is converted into UDP-GlcNAc by the transfer of uridine 5-monophosphate (from uridine 5-triphosphate), a reaction catalyzed by the N-terminal domain. This chain is Bifunctional protein GlmU, found in Campylobacter fetus subsp. fetus (strain 82-40).